Reading from the N-terminus, the 408-residue chain is Alpha-2Da adrenergic receptor (408 aa).

Residues 1-30 lie on the Extracellular side of the membrane; the sequence is MSVTPTANSTEEAANITASPRLWPYTEPAS. N-linked (GlcNAc...) asparagine glycosylation is found at Asn-8 and Asn-15. The chain crosses the membrane as a helical span at residues 31–55; it reads AIIILVVSLIILLTIVGNVLVIVAV. Residues 56-67 lie on the Cytoplasmic side of the membrane; it reads LTSRALRAPQNL. The chain crosses the membrane as a helical span at residues 68-93; the sequence is FLVSLACADILVATLVIPFSLANEIM. The Extracellular portion of the chain corresponds to 94–103; the sequence is GYWYFGSTWC. Cys-103 and Cys-176 form a disulfide bridge. Residues 104-126 traverse the membrane as a helical segment; sequence AFYLALDVLFCTSSIVHLCAISL. Topologically, residues 127 to 147 are cytoplasmic; sequence DRYWSVTKAVRYNLKRTPRRI. Residues 148-170 traverse the membrane as a helical segment; the sequence is KCMIAVVWLISAVISFPPLIMTK. The Extracellular portion of the chain corresponds to 171 to 181; sequence HDEKECLINDE. Residues 182–205 form a helical membrane-spanning segment; that stretch reads TWYILSSCAVSFFAPGLIMITVYC. The Cytoplasmic segment spans residues 206-332; the sequence is KIYRVAKQRS…QMREKRFTFV (127 aa). The disordered stretch occupies residues 242–306; that stretch reads FEKESPSSNS…SCRVSWAAHQ (65 aa). Over residues 260-270 the composition is skewed to acidic residues; sequence ELDDIDLEESA. Positions 277-286 are enriched in basic residues; the sequence is RGSRFSKRRR. A helical transmembrane segment spans residues 333-356; sequence LAVVMGVFVLCWFPFFFTYSLQAV. The Extracellular segment spans residues 357–369; the sequence is CGERCGPPEALFK. The helical transmembrane segment at 370 to 390 threads the bilayer; sequence LFFWIGYCNSSVNPIIYTIFN. The Cytoplasmic segment spans residues 391-408; sequence RDFRKAFKKVVCWSAQRT.

This sequence belongs to the G-protein coupled receptor 1 family. Adrenergic receptor subfamily. ADRA2D sub-subfamily.

It localises to the cell membrane. Alpha-2 adrenergic receptors mediate the catecholamine-induced inhibition of adenylate cyclase through the action of G proteins. The order of potency for this receptor is dexmedetomidine &gt; norepinephrine &gt; epinephrine &gt; oxymetazoline. The chain is Alpha-2Da adrenergic receptor (adra2da) from Danio rerio (Zebrafish).